A 195-amino-acid chain; its full sequence is 7-methyl-GTP pyrophosphatase (195 aa).

Aspartate 71 serves as the catalytic Proton acceptor.

Belongs to the Maf family. YceF subfamily. A divalent metal cation serves as cofactor.

It is found in the cytoplasm. It catalyses the reaction N(7)-methyl-GTP + H2O = N(7)-methyl-GMP + diphosphate + H(+). In terms of biological role, nucleoside triphosphate pyrophosphatase that hydrolyzes 7-methyl-GTP (m(7)GTP). May have a dual role in cell division arrest and in preventing the incorporation of modified nucleotides into cellular nucleic acids. The protein is 7-methyl-GTP pyrophosphatase of Shewanella oneidensis (strain ATCC 700550 / JCM 31522 / CIP 106686 / LMG 19005 / NCIMB 14063 / MR-1).